The sequence spans 310 residues: D-alanyl-D-alanine endopeptidase (310 aa).

Positions 1 to 25 (MPKFRVSLFSLALMLAVPFAPQAVA) are cleaved as a signal peptide. The Acyl-ester intermediate role is filled by Ser67. Catalysis depends on Lys70, which acts as the Proton acceptor. Ser124 is an active-site residue. Residue Lys231 participates in substrate binding.

This sequence belongs to the peptidase S11 family. In terms of processing, pbp8 is a proteolytic product of Pbp7.

It is found in the periplasm. In terms of biological role, cell wall formation. May play a specialized role in remodeling the cell wall. Specifically hydrolyzes the DD-diaminopimelate-alanine bonds in high-molecular-mass murein sacculi. The sequence is that of D-alanyl-D-alanine endopeptidase (pbpG) from Escherichia coli (strain K12).